A 123-amino-acid polypeptide reads, in one-letter code: UPF0295 protein Bcer98_0460 (123 aa).

2 consecutive transmembrane segments (helical) span residues 12–32 (IRTF…LGVF) and 43–63 (FMML…WIGM).

Belongs to the UPF0295 family.

The protein localises to the cell membrane. The chain is UPF0295 protein Bcer98_0460 from Bacillus cytotoxicus (strain DSM 22905 / CIP 110041 / 391-98 / NVH 391-98).